A 130-amino-acid polypeptide reads, in one-letter code: Small ribosomal subunit protein uS11 (130 aa).

Belongs to the universal ribosomal protein uS11 family. In terms of assembly, part of the 30S ribosomal subunit. Interacts with proteins S7 and S18. Binds to IF-3.

Functionally, located on the platform of the 30S subunit, it bridges several disparate RNA helices of the 16S rRNA. Forms part of the Shine-Dalgarno cleft in the 70S ribosome. The chain is Small ribosomal subunit protein uS11 from Caldanaerobacter subterraneus subsp. tengcongensis (strain DSM 15242 / JCM 11007 / NBRC 100824 / MB4) (Thermoanaerobacter tengcongensis).